The following is a 301-amino-acid chain: Ribosomal protein L11 methyltransferase (301 aa).

Positions 146, 167, 189, and 237 each coordinate S-adenosyl-L-methionine.

It belongs to the methyltransferase superfamily. PrmA family.

It is found in the cytoplasm. It catalyses the reaction L-lysyl-[protein] + 3 S-adenosyl-L-methionine = N(6),N(6),N(6)-trimethyl-L-lysyl-[protein] + 3 S-adenosyl-L-homocysteine + 3 H(+). In terms of biological role, methylates ribosomal protein L11. The sequence is that of Ribosomal protein L11 methyltransferase from Prochlorococcus marinus (strain MIT 9303).